Here is a 451-residue protein sequence, read N- to C-terminus: Probable metal transport system membrane protein CT_069 (451 aa).

The next 8 membrane-spanning stretches (helical) occupy residues 14 to 34 (SFLA…ILLV), 38 to 58 (PLLS…GALL), 70 to 90 (WVII…ISFL), 100 to 120 (SALC…VSYV), 145 to 165 (TEAK…WWWY), 192 to 212 (VLVF…ILLI), 233 to 253 (ILIL…YFSV), and 269 to 289 (ILPT…LCLI). The tract at residues 432 to 451 (PDYDPHQREIPKRTRKSDGC) is disordered. Over residues 434-451 (YDPHQREIPKRTRKSDGC) the composition is skewed to basic and acidic residues.

This sequence belongs to the ABC-3 integral membrane protein family.

The protein resides in the cell inner membrane. In terms of biological role, part of an ATP-driven transport system CT_067/CT_068/CT_069/CT_070 for a metal. In Chlamydia trachomatis serovar D (strain ATCC VR-885 / DSM 19411 / UW-3/Cx), this protein is Probable metal transport system membrane protein CT_069.